The sequence spans 130 residues: MAATQYYGTGRRKTSTARVFAKVGTGNIIVNKLPLDEYFGRETSRMVVRQPLELVEMTEKLDIMVTVKGGGNTGQAGAIRHGITRALMELDESLRPSLRAAGFVTRDARKVERKKVGLRKARRKPQFSKR.

The protein belongs to the universal ribosomal protein uS9 family.

In Shewanella pealeana (strain ATCC 700345 / ANG-SQ1), this protein is Small ribosomal subunit protein uS9.